The following is a 484-amino-acid chain: Signal transduction histidine-protein kinase/phosphatase MprB (484 aa).

Over residues 1-10 (MAADNAGRWP) the composition is skewed to low complexity. The tract at residues 1–23 (MAADNAGRWPGQPPGPPAPTHPA) is disordered. Topologically, residues 1–31 (MAADNAGRWPGQPPGPPAPTHPASSVSLRWR) are cytoplasmic. Residues 11-20 (GQPPGPPAPT) are compositionally biased toward pro residues. A helical transmembrane segment spans residues 32–52 (VMLLAMSMVVISVVLMAVAVF). Residues 53 to 172 (AVTSRALYDD…TGKVLKRLGT (120 aa)) are Extracellular-facing. The helical transmembrane segment at 173 to 193 (VLLIVGGLGVAVAAIAGGMVA) threads the bilayer. The HAMP domain occupies 194-246 (SAGLRPVGRLTQAAERVARTDDLRPIPVIGNDELARLTETFNMMLRALAESRE). The Cytoplasmic segment spans residues 194 to 484 (SAGLRPVGRL…SPAGSDEAER (291 aa)). Residues 254–474 (DAGHELRTPL…AMHVVLPGRP (221 aa)) form the Histidine kinase domain. His-257 carries the phosphohistidine; by autocatalysis modification.

Requires Mg(2+) as cofactor. Mn(2+) serves as cofactor. In terms of processing, autophosphorylated.

The protein resides in the cell membrane. It catalyses the reaction ATP + protein L-histidine = ADP + protein N-phospho-L-histidine.. Functionally, member of the two-component regulatory system MprB/MprA which contributes to maintaining a balance among several systems involved in stress resistance and is required for establishment and maintenance of persistent infection in the host. In response to environmental signals MprB acts both as a membrane-associated protein kinase that undergoes autophosphorylation and subsequently transfers the phosphate to MprA, and a protein phosphatase that dephosphorylates phospho-MprA. This Mycolicibacterium vanbaalenii (strain DSM 7251 / JCM 13017 / BCRC 16820 / KCTC 9966 / NRRL B-24157 / PYR-1) (Mycobacterium vanbaalenii) protein is Signal transduction histidine-protein kinase/phosphatase MprB (mprB).